Here is a 121-residue protein sequence, read N- to C-terminus: Large ribosomal subunit protein bL12 (121 aa).

This sequence belongs to the bacterial ribosomal protein bL12 family. In terms of assembly, homodimer. Part of the ribosomal stalk of the 50S ribosomal subunit. Forms a multimeric L10(L12)X complex, where L10 forms an elongated spine to which 2 to 4 L12 dimers bind in a sequential fashion. Binds GTP-bound translation factors.

Functionally, forms part of the ribosomal stalk which helps the ribosome interact with GTP-bound translation factors. Is thus essential for accurate translation. In Streptococcus agalactiae serotype Ia (strain ATCC 27591 / A909 / CDC SS700), this protein is Large ribosomal subunit protein bL12.